Here is a 205-residue protein sequence, read N- to C-terminus: Holliday junction branch migration complex subunit RuvA (205 aa).

Positions 1 to 65 are domain I; it reads MIAKLKGILD…EDRIHLFGFL (65 aa). Residues 66-144 form a domain II region; it reads DNTEKVAFNM…NINTIANNTS (79 aa). The segment at 145–153 is flexible linker; the sequence is LATLSTDSN. A domain III region spans residues 154 to 205; sequence THDNILSDAITALIALGISRAEATQILSDIYALSPSISVNELVRTALQRRAK.

The protein belongs to the RuvA family. As to quaternary structure, homotetramer. Forms an RuvA(8)-RuvB(12)-Holliday junction (HJ) complex. HJ DNA is sandwiched between 2 RuvA tetramers; dsDNA enters through RuvA and exits via RuvB. An RuvB hexamer assembles on each DNA strand where it exits the tetramer. Each RuvB hexamer is contacted by two RuvA subunits (via domain III) on 2 adjacent RuvB subunits; this complex drives branch migration. In the full resolvosome a probable DNA-RuvA(4)-RuvB(12)-RuvC(2) complex forms which resolves the HJ.

The protein localises to the cytoplasm. In terms of biological role, the RuvA-RuvB-RuvC complex processes Holliday junction (HJ) DNA during genetic recombination and DNA repair, while the RuvA-RuvB complex plays an important role in the rescue of blocked DNA replication forks via replication fork reversal (RFR). RuvA specifically binds to HJ cruciform DNA, conferring on it an open structure. The RuvB hexamer acts as an ATP-dependent pump, pulling dsDNA into and through the RuvAB complex. HJ branch migration allows RuvC to scan DNA until it finds its consensus sequence, where it cleaves and resolves the cruciform DNA. This Orientia tsutsugamushi (strain Ikeda) (Rickettsia tsutsugamushi) protein is Holliday junction branch migration complex subunit RuvA.